Here is a 51-residue protein sequence, read N- to C-terminus: uncharacterized protein (51 aa).

This is an uncharacterized protein from Pseudoalteromonas espejiana (Bacteriophage PM2).